A 353-amino-acid chain; its full sequence is MTIALGKFTKDEKDLFDIMDDWLRRDRFVFVGWSGLLLFPCAYFALGGWFTGTTFVTSWYTHGLASSYLEGCNFLTAAVSTPANSLAHSLLLLWGPEAQGDFTRWCQLGGLWTFVALHGAFALIGFMLRQFEIARSVQLRPYNAIAFSGPIAVFVSVFLIYPLGQSGWFFAPSFGVAAIFRFILFFQGFHNWTLNPFHMMGVAGVLGAALLCAIHGATVENTLFEDGDGANTFRAFNPTQAEETYSMVTANRFWSQIFGVAFSNKRWLHFFMLFVPVTGLWMSALGVVGLALNLRAYDFVSQEIRAAEDPEFETFYTKNILLNEGIRAWMAAQDQPHENLIFPEEVLPRGNAL.

An N-acetylthreonine modification is found at T2. Residue T2 is modified to Phosphothreonine. The chain crosses the membrane as a helical span at residues 41–61; the sequence is CAYFALGGWFTGTTFVTSWYT. Residue H118 participates in chlorophyll a binding. Residues 125-141 form a helical membrane-spanning segment; the sequence is GFMLRQFEIARSVQLRP. Pheophytin a-binding residues include Q130 and N143. The helical transmembrane segment at 153-166 threads the bilayer; sequence VFVSVFLIYPLGQS. Residue H198 coordinates chlorophyll a. The chain crosses the membrane as a helical span at residues 208–228; sequence AALLCAIHGATVENTLFEDGD. Residues H215 and F262 each coordinate a plastoquinone. H215 serves as a coordination point for Fe cation. H269 contributes to the Fe cation binding site. A helical transmembrane segment spans residues 279-295; it reads GLWMSALGVVGLALNLR.

The protein belongs to the reaction center PufL/M/PsbA/D family. In terms of assembly, PSII is composed of 1 copy each of membrane proteins PsbA, PsbB, PsbC, PsbD, PsbE, PsbF, PsbH, PsbI, PsbJ, PsbK, PsbL, PsbM, PsbT, PsbX, PsbY, PsbZ, Psb30/Ycf12, at least 3 peripheral proteins of the oxygen-evolving complex and a large number of cofactors. It forms dimeric complexes. The D1/D2 heterodimer binds P680, chlorophylls that are the primary electron donor of PSII, and subsequent electron acceptors. It shares a non-heme iron and each subunit binds pheophytin, quinone, additional chlorophylls, carotenoids and lipids. There is also a Cl(-1) ion associated with D1 and D2, which is required for oxygen evolution. The PSII complex binds additional chlorophylls, carotenoids and specific lipids. is required as a cofactor.

It is found in the plastid. The protein localises to the chloroplast thylakoid membrane. It carries out the reaction 2 a plastoquinone + 4 hnu + 2 H2O = 2 a plastoquinol + O2. In terms of biological role, photosystem II (PSII) is a light-driven water:plastoquinone oxidoreductase that uses light energy to abstract electrons from H(2)O, generating O(2) and a proton gradient subsequently used for ATP formation. It consists of a core antenna complex that captures photons, and an electron transfer chain that converts photonic excitation into a charge separation. The D1/D2 (PsbA/PsbD) reaction center heterodimer binds P680, the primary electron donor of PSII as well as several subsequent electron acceptors. D2 is needed for assembly of a stable PSII complex. In Oenothera argillicola (Appalachian evening primrose), this protein is Photosystem II D2 protein.